Consider the following 59-residue polypeptide: Large ribosomal subunit protein uL30 (59 aa).

This sequence belongs to the universal ribosomal protein uL30 family. Part of the 50S ribosomal subunit.

This chain is Large ribosomal subunit protein uL30, found in Acetivibrio thermocellus (strain ATCC 27405 / DSM 1237 / JCM 9322 / NBRC 103400 / NCIMB 10682 / NRRL B-4536 / VPI 7372) (Clostridium thermocellum).